The sequence spans 1269 residues: MTPTTNNKRINFASIKNPLFYPDFLEVQLKSFHDFLQLDTPPERRKKEGLYKVFAENFPITDTRNNFVLEFLDYYIDPPKYSIEECLSRGLTYSVPLKAKLKLYCTDPDHEDFATVIQDVFLGPIPYMTSSGTFVINGAERVIVSQLHRSPGVFFGQSLHTNGTKLYSARIIPFKGSWIEFATDINNVMYAYIDRKKKLPVTTLLRAIGFEADKDILDIFNLAEEVKVTKANLKKCIGRKLAARVINTYIDDLSDEDTGEVVSMERITVVVDREVELTEDNIEAILNSNTQTILLHRNDSNTSDYSIIFNTLQKDPCNSEKEALYYVYRQLRNAEPADDASAREVITNLFFSDKRYDLGDVGRYRINKKLNLNIDPDIKVLTNEDIIEIIKYLIELVNSKASVDDIDHLSNRRVRTVGEQLYNQFGIGLARMARTVRDRMNVRDNEVFTPIDLVNAKTISSVVNSFFGTNALSQFMDQTNPLAEITHKRRLSALGPGGLSRERAGFEVRDVHYTHYGRLCPIETPEGPNIGLISSLCVYAKISDLGFITTPYREVKNGKVDFSDNGLKYYTAEEEEEKTVAQGNAPLDENGRFVRERVKARYESDFPLVTPDEVDLMDVSPTQIASIAAALIPFLEHDDANRALMGSNMMRQAVPLLRPESPIVGTGIEGKLVKDSRTQIVAERGGEVVFVDASCIKIRYDRTADEEFVSFDDAIVTYYLPKYRKTNQSTTIDLHPICSKGDRVEAGQILTEGYSTQGGELALGRNVQVAYMPWKGYNYEDAIVLNERMVREDFFTSVHVDEYILEVRETKRGLEELTSDIPNVSEDATRDLDENGIVRIGAHIEPGDILIGKITPKGESDPTPEEKLLRAIFGDKAGDVKDASLKATPSLRGVVIDTKLFSKAAKKKSRTSTKEAVSKLDETYAKRQQQLHERLIDKLTELTKGKTCCGVKDYLNVELIKAGSKFAKKDLEALDFNVIQLSDWTNDAHTNELIKAVAVNYLKHSKEIEAELRRRKLDETIGDELPAGIVQMAKVYIAKKRKIQVGDKMAGRHGNKGIVSKIVRQEDMPFLADGTPVDICLNPLGVPSRMNLGQIFEAVLAWAGRKMNVKFATPIFDGASLNDMNEWTDKAGLPRDGKTYLYDGGTGERFDQPATVGVTYFLKLGHMVDDKMHARSIGPYSLITQQPLGGKAQFGGQRFGEMEVWALEAFGASHILQEILTVKSDDVVGRSKAYEAIVKGDPMPTPGIPESLNVLLHELKGLGLSFSLD.

This sequence belongs to the RNA polymerase beta chain family. In terms of assembly, the RNAP catalytic core consists of 2 alpha, 1 beta, 1 beta' and 1 omega subunit. When a sigma factor is associated with the core the holoenzyme is formed, which can initiate transcription.

It carries out the reaction RNA(n) + a ribonucleoside 5'-triphosphate = RNA(n+1) + diphosphate. In terms of biological role, DNA-dependent RNA polymerase catalyzes the transcription of DNA into RNA using the four ribonucleoside triphosphates as substrates. The polypeptide is DNA-directed RNA polymerase subunit beta (Porphyromonas gingivalis (strain ATCC BAA-308 / W83)).